A 172-amino-acid chain; its full sequence is MDLKSLIRDIPDFPKPGILFRDITTLLNHPEGMRYTMDALVQLCLEANLKPDHVVGMESRGFIFGPTLAYNLNAGFVPVRKPGKLLAAVHTVEYELEYGTDTLEIHQDAVGSGDKIVIVDDLIATGGTAKATAELLTKIGCDIIGFVFIVELLDLKGRDRLPDAPVLSLIQY.

This sequence belongs to the purine/pyrimidine phosphoribosyltransferase family. As to quaternary structure, homodimer.

The protein localises to the cytoplasm. The enzyme catalyses AMP + diphosphate = 5-phospho-alpha-D-ribose 1-diphosphate + adenine. The protein operates within purine metabolism; AMP biosynthesis via salvage pathway; AMP from adenine: step 1/1. Its function is as follows. Catalyzes a salvage reaction resulting in the formation of AMP, that is energically less costly than de novo synthesis. This Picosynechococcus sp. (strain ATCC 27264 / PCC 7002 / PR-6) (Agmenellum quadruplicatum) protein is Adenine phosphoribosyltransferase.